Consider the following 433-residue polypeptide: ATP-dependent protease ATPase subunit HslU (433 aa).

Residues Val18, 60–65 (GVGKTE), Asp246, Glu311, and Arg383 contribute to the ATP site.

Belongs to the ClpX chaperone family. HslU subfamily. As to quaternary structure, a double ring-shaped homohexamer of HslV is capped on each side by a ring-shaped HslU homohexamer. The assembly of the HslU/HslV complex is dependent on binding of ATP.

Its subcellular location is the cytoplasm. Its function is as follows. ATPase subunit of a proteasome-like degradation complex; this subunit has chaperone activity. The binding of ATP and its subsequent hydrolysis by HslU are essential for unfolding of protein substrates subsequently hydrolyzed by HslV. HslU recognizes the N-terminal part of its protein substrates and unfolds these before they are guided to HslV for hydrolysis. In Rhodopseudomonas palustris (strain BisA53), this protein is ATP-dependent protease ATPase subunit HslU.